Here is a 745-residue protein sequence, read N- to C-terminus: Ribosomal protein S6 kinase alpha-6 (745 aa).

Residues 1 to 28 (MLPFAPQDEPWDREMEVFSGGGASSGEV) form a disordered region. The 258-residue stretch at 73-330 (FELLKVLGQG…VEEIKRHLFF (258 aa)) folds into the Protein kinase 1 domain. Residues 79–87 (LGQGSFGKV) and Lys105 each bind ATP. The Proton acceptor role is filled by Asp198. Phosphoserine occurs at positions 232, 372, and 389. One can recognise an AGC-kinase C-terminal domain in the interval 331-400 (ANIDWDKLYK…VATSIAEEYK (70 aa)). Positions 426 to 683 (YELKEDIGVG…AEQILKHSWI (258 aa)) constitute a Protein kinase 2 domain. ATP contacts are provided by residues 432 to 440 (IGVGSYSVC) and Lys455. Asp543 (proton acceptor) is an active-site residue. Thr581 carries the post-translational modification Phosphothreonine.

It belongs to the protein kinase superfamily. AGC Ser/Thr protein kinase family. S6 kinase subfamily. In terms of assembly, forms a complex with MAPK3/ERK1 but not with MAPK9 or MAPK14 in serum-starved cells. Requires Mg(2+) as cofactor. Phosphorylated at Ser-232, Ser-372, and Ser-389 in serum-starved cells.

The protein localises to the cytoplasm. It localises to the cytosol. Its subcellular location is the nucleus. It catalyses the reaction L-seryl-[protein] + ATP = O-phospho-L-seryl-[protein] + ADP + H(+). The enzyme catalyses L-threonyl-[protein] + ATP = O-phospho-L-threonyl-[protein] + ADP + H(+). With respect to regulation, constitutively activated by phosphorylation at Ser-232, Ser-372, and Ser-389 in serum-starved cells. Does not require growth factor stimulation for significant kinase activity. Constitutively active serine/threonine-protein kinase that exhibits growth-factor-independent kinase activity and that may participate in p53/TP53-dependent cell growth arrest signaling and play an inhibitory role during embryogenesis. In Homo sapiens (Human), this protein is Ribosomal protein S6 kinase alpha-6 (RPS6KA6).